Here is a 212-residue protein sequence, read N- to C-terminus: Large ribosomal subunit protein uL3 (212 aa).

The segment at M135–G161 is disordered. Q153 is modified (N5-methylglutamine).

Belongs to the universal ribosomal protein uL3 family. Part of the 50S ribosomal subunit. Forms a cluster with proteins L14 and L19. Post-translationally, methylated by PrmB.

Functionally, one of the primary rRNA binding proteins, it binds directly near the 3'-end of the 23S rRNA, where it nucleates assembly of the 50S subunit. The sequence is that of Large ribosomal subunit protein uL3 from Alteromonas mediterranea (strain DSM 17117 / CIP 110805 / LMG 28347 / Deep ecotype).